A 373-amino-acid chain; its full sequence is RNA 3'-terminal phosphate cyclase-like protein (373 aa).

Belongs to the RNA 3'-terminal cyclase family. Type 2 subfamily. Part of the small subunit (SSU) processome, composed of more than 70 proteins and the RNA chaperone small nucleolar RNA (snoRNA) U3. Interacts with BMS1.

Its subcellular location is the nucleus. It localises to the nucleolus. Its function is as follows. As part of the small subunit (SSU) processome, it plays a role in 40S-ribosomal-subunit biogenesis in the early pre-rRNA processing steps at sites A0, A1 and A2 that are required for proper maturation of the 18S RNA. Activates BMS1 by promoting GDP/GTP exchange. Does not have cyclase activity. The chain is RNA 3'-terminal phosphate cyclase-like protein (Rcl1) from Mus musculus (Mouse).